The sequence spans 247 residues: Adenosylcobinamide-GDP ribazoletransferase (247 aa).

The next 5 membrane-spanning stretches (helical) occupy residues 34-54 (IITFPLIGLLLGAISGLVFMV), 57-77 (AWCGAPLAALFSVLVLALMTG), 113-133 (GGLALIFVVLAKILVLSELAL), 138-158 (ILASLAAACAVSRGTAALLMY), and 194-214 (VLLLGMHGVAAMVVTMVAIFI).

It belongs to the CobS family. Requires Mg(2+) as cofactor.

The protein resides in the cell inner membrane. The catalysed reaction is alpha-ribazole + adenosylcob(III)inamide-GDP = adenosylcob(III)alamin + GMP + H(+). It catalyses the reaction alpha-ribazole 5'-phosphate + adenosylcob(III)inamide-GDP = adenosylcob(III)alamin 5'-phosphate + GMP + H(+). It participates in cofactor biosynthesis; adenosylcobalamin biosynthesis; adenosylcobalamin from cob(II)yrinate a,c-diamide: step 7/7. Functionally, joins adenosylcobinamide-GDP and alpha-ribazole to generate adenosylcobalamin (Ado-cobalamin). Also synthesizes adenosylcobalamin 5'-phosphate from adenosylcobinamide-GDP and alpha-ribazole 5'-phosphate. This is Adenosylcobinamide-GDP ribazoletransferase from Shigella flexneri serotype 5b (strain 8401).